The primary structure comprises 765 residues: DNA topoisomerase 1 (765 aa).

Positions 1–23 are enriched in basic and acidic residues; it reads MSGDHLHNDSQIEADFRLNDSHK. Residues 1–199 form a disordered region; the sequence is MSGDHLHNDS…NKKKKPKKEE (199 aa). Ser-2 is subject to N-acetylserine. Residues Ser-2 and Ser-10 each carry the phosphoserine modification. A compositionally biased stretch (basic residues) spans 24–39; it reads HKDKHKDREHRHKEHK. Basic and acidic residues predominate over residues 40–108; that stretch reads KEKDREKSKH…DAKIKKEKEN (69 aa). Ser-57 carries the post-translational modification Phosphoserine. Lys-101 is covalently cross-linked (Glycyl lysine isopeptide (Lys-Gly) (interchain with G-Cter in SUMO2)). Lys-103 is covalently cross-linked (Glycyl lysine isopeptide (Lys-Gly) (interchain with G-Cter in SUMO); alternate). Lys-103 is covalently cross-linked (Glycyl lysine isopeptide (Lys-Gly) (interchain with G-Cter in SUMO2); alternate). Ser-112 carries the phosphoserine modification. A Glycyl lysine isopeptide (Lys-Gly) (interchain with G-Cter in SUMO); alternate cross-link involves residue Lys-117. Lys-117 is covalently cross-linked (Glycyl lysine isopeptide (Lys-Gly) (interchain with G-Cter in SUMO2); alternate). Residue Lys-117 forms a Glycyl lysine isopeptide (Lys-Gly) (interchain with G-Cter in SUMO1); alternate linkage. The segment covering 129-166 has biased composition (basic and acidic residues); sequence PKEDIKPLKRPRDEDDADYKPKKIKTEDTKKEKKRKLE. Residues Lys-134 and Lys-148 each participate in a glycyl lysine isopeptide (Lys-Gly) (interchain with G-Cter in SUMO2) cross-link. A Glycyl lysine isopeptide (Lys-Gly) (interchain with G-Cter in SUMO); alternate cross-link involves residue Lys-153. Residue Lys-153 forms a Glycyl lysine isopeptide (Lys-Gly) (interchain with G-Cter in SUMO2); alternate linkage. Glycyl lysine isopeptide (Lys-Gly) (interchain with G-Cter in SUMO2) cross-links involve residues Lys-158 and Lys-164. Lys-172 participates in a covalent cross-link: Glycyl lysine isopeptide (Lys-Gly) (interchain with G-Cter in SUMO2); alternate. Lys-172 carries the N6-acetyllysine; alternate modification. The segment covering 179–199 has biased composition (basic and acidic residues); it reads KDKDKKVPEPDNKKKKPKKEE. A Glycyl lysine isopeptide (Lys-Gly) (interchain with G-Cter in SUMO2) cross-link involves residue Lys-204. At Lys-280 the chain carries N6-acetyllysine. A Glycyl lysine isopeptide (Lys-Gly) (interchain with G-Cter in SUMO2) cross-link involves residue Lys-336. Interaction with DNA regions lie at residues 425–426 and 488–493; these read KY and RAGNEK. Positions 432–765 constitute a Topo IB-type catalytic domain; the sequence is SSRIKGEKDW…IDMADEDYEF (334 aa). At Ser-506 the chain carries Phosphoserine; by CK2. Lys-549 participates in a covalent cross-link: Glycyl lysine isopeptide (Lys-Gly) (interchain with G-Cter in SUMO2). The tract at residues 585 to 587 is interaction with DNA; it reads TAK. Glycyl lysine isopeptide (Lys-Gly) (interchain with G-Cter in SUMO2) cross-links involve residues Lys-642, Lys-700, and Lys-712. The active-site O-(3'-phospho-DNA)-tyrosine intermediate is the Tyr-723.

Belongs to the type IB topoisomerase family. As to quaternary structure, monomer. Interacts with ERCC6. Interacts with TPRN; TPRN interacts with a number of DNA damage response proteins, is recruited to sites of DNA damage and may play a role in DNA damage repair. In terms of assembly, (Microbial infection) Interacts with SV40 Large T antigen; this interactions allows viral DNA replication. Post-translationally, sumoylated. Lys-117 is the main site of sumoylation. Sumoylation plays a role in partitioning TOP1 between nucleoli and nucleoplasm. Levels are dramatically increased on camptothecin (CPT) treatment. In terms of processing, phosphorylation at Ser-506 by CK2 increases binding to supercoiled DNA and sensitivity to camptothecin. Endothelial cells.

The protein localises to the nucleus. It localises to the nucleolus. Its subcellular location is the nucleoplasm. The catalysed reaction is ATP-independent breakage of single-stranded DNA, followed by passage and rejoining.. Specifically inhibited by camptothecin (CPT), a plant alkaloid with antitumor activity. In terms of biological role, releases the supercoiling and torsional tension of DNA introduced during the DNA replication and transcription by transiently cleaving and rejoining one strand of the DNA duplex. Introduces a single-strand break via transesterification at a target site in duplex DNA. The scissile phosphodiester is attacked by the catalytic tyrosine of the enzyme, resulting in the formation of a DNA-(3'-phosphotyrosyl)-enzyme intermediate and the expulsion of a 5'-OH DNA strand. The free DNA strand then rotates around the intact phosphodiester bond on the opposing strand, thus removing DNA supercoils. Finally, in the religation step, the DNA 5'-OH attacks the covalent intermediate to expel the active-site tyrosine and restore the DNA phosphodiester backbone. Regulates the alternative splicing of tissue factor (F3) pre-mRNA in endothelial cells. Involved in the circadian transcription of the core circadian clock component BMAL1 by altering the chromatin structure around the ROR response elements (ROREs) on the BMAL1 promoter. This Homo sapiens (Human) protein is DNA topoisomerase 1 (TOP1).